A 171-amino-acid chain; its full sequence is Lipoprotein signal peptidase (171 aa).

2 helical membrane passes run 67-87 (YALLGLTLAATIFMILWLWRS) and 88-108 (TSKLIACALGLIIGGALGNAY). Residues Asp-118 and Asp-136 contribute to the active site. Residues 127 to 147 (FSWYVFNLADAAIVAGVALLL) traverse the membrane as a helical segment.

Belongs to the peptidase A8 family.

The protein localises to the cell inner membrane. It catalyses the reaction Release of signal peptides from bacterial membrane prolipoproteins. Hydrolyzes -Xaa-Yaa-Zaa-|-(S,diacylglyceryl)Cys-, in which Xaa is hydrophobic (preferably Leu), and Yaa (Ala or Ser) and Zaa (Gly or Ala) have small, neutral side chains.. It functions in the pathway protein modification; lipoprotein biosynthesis (signal peptide cleavage). This protein specifically catalyzes the removal of signal peptides from prolipoproteins. The polypeptide is Lipoprotein signal peptidase (Methylocella silvestris (strain DSM 15510 / CIP 108128 / LMG 27833 / NCIMB 13906 / BL2)).